Reading from the N-terminus, the 601-residue chain is Elongation factor 4 (601 aa).

The 183-residue stretch at 7–189 (RNIRNFSIIA…AIVHRIPPPK (183 aa)) folds into the tr-type G domain. GTP-binding positions include 19–24 (DHGKST) and 136–139 (NKID).

Belongs to the TRAFAC class translation factor GTPase superfamily. Classic translation factor GTPase family. LepA subfamily.

The protein localises to the cell inner membrane. It catalyses the reaction GTP + H2O = GDP + phosphate + H(+). Functionally, required for accurate and efficient protein synthesis under certain stress conditions. May act as a fidelity factor of the translation reaction, by catalyzing a one-codon backward translocation of tRNAs on improperly translocated ribosomes. Back-translocation proceeds from a post-translocation (POST) complex to a pre-translocation (PRE) complex, thus giving elongation factor G a second chance to translocate the tRNAs correctly. Binds to ribosomes in a GTP-dependent manner. The sequence is that of Elongation factor 4 from Xanthomonas campestris pv. campestris (strain ATCC 33913 / DSM 3586 / NCPPB 528 / LMG 568 / P 25).